Reading from the N-terminus, the 119-residue chain is Small ribosomal subunit protein bS16 (119 aa).

Residues 89–103 (TTKSTKEKAATDKKA) are compositionally biased toward basic and acidic residues. The disordered stretch occupies residues 89 to 119 (TTKSTKEKAATDKKAKVTKKPKTKTTTDVKK).

The protein belongs to the bacterial ribosomal protein bS16 family.

In Spiroplasma kunkelii, this protein is Small ribosomal subunit protein bS16.